Here is a 541-residue protein sequence, read N- to C-terminus: Cytochrome P450 monooxygenase claW (541 aa).

The helical transmembrane segment at 12-32 threads the bilayer; that stretch reads VINALVILFSFWAFLSLIRVI. A heme-binding site is contributed by C480.

It belongs to the cytochrome P450 family. Heme is required as a cofactor.

The protein localises to the membrane. Its pathway is secondary metabolite biosynthesis; terpenoid biosynthesis. Its function is as follows. Cytochrome P450 monooxygenase; part of the gene cluster that mediates the biosynthesis of clavilactone A, a meroterpenoid that features a unique benzo-fused ten-membered carbocyclic ring unit with an alpha,beta-epoxy-gamma-lactone moiety, forming an intriguing 10/5/3 tricyclic nested skeleton. Cytochrome P450 monooxygenases claO, claP, claQ, claU, and claW are close orthologs, suggesting that a redundant function or pseudogenes are present in the cla cluster. These monoxygenases are not involved in clavilactone A biosynthesis nor its modification. ClaR, ClaS and ClaT are sufficient to produce clavilactone A. The biosynthesis begins with the prenyltransferase claS that transfers geranyl pyrophosphate (GPP) to hydroquinone to produces geranylhydroquinone. The cytochrome P450 monooxygenase claR then catalyzes the diradical coupling reaction between the intramolecular hydroquinone and allyl moieties to form the benzo-fused ten-membered carbocyclic ring unit of wigantol. Finally the cytochrome P450 monooxygenase claT exquisitely and stereoselectively assembles the alpha,beta-epoxy-gamma-lactone moiety, producing clavilactone A via arnebinol A. The protein is Cytochrome P450 monooxygenase claW of Ampulloclitocybe clavipes (Club foot).